A 59-amino-acid chain; its full sequence is Large ribosomal subunit protein bL32c (59 aa).

The span at 1 to 19 (MAVPKKRTSKAKKNARKAN) shows a compositional bias: basic residues. The segment at 1-24 (MAVPKKRTSKAKKNARKANWKNQA) is disordered.

This sequence belongs to the bacterial ribosomal protein bL32 family.

It is found in the plastid. It localises to the chloroplast. This Porphyra purpurea (Red seaweed) protein is Large ribosomal subunit protein bL32c (rpl32).